The following is a 251-amino-acid chain: Hydroxyacylglutathione hydrolase (251 aa).

The Zn(2+) site is built by H53, H55, D57, H58, H110, D127, and H165.

It belongs to the metallo-beta-lactamase superfamily. Glyoxalase II family. Monomer. Zn(2+) serves as cofactor.

The enzyme catalyses an S-(2-hydroxyacyl)glutathione + H2O = a 2-hydroxy carboxylate + glutathione + H(+). Its pathway is secondary metabolite metabolism; methylglyoxal degradation; (R)-lactate from methylglyoxal: step 2/2. Thiolesterase that catalyzes the hydrolysis of S-D-lactoyl-glutathione to form glutathione and D-lactic acid. The polypeptide is Hydroxyacylglutathione hydrolase (Pectobacterium atrosepticum (strain SCRI 1043 / ATCC BAA-672) (Erwinia carotovora subsp. atroseptica)).